Reading from the N-terminus, the 431-residue chain is 3-deoxy-D-manno-octulosonic acid transferase (431 aa).

A helical; Signal-anchor membrane pass occupies residues 5-27; the sequence is WLTSRLYDAFLVCAFFVSAPRIF. Glutamate 67 serves as the catalytic Proton acceptor. Residues 275–276, 315–317, and 342–345 contribute to the CMP site; these read PR, MGV, and NLLE.

This sequence belongs to the glycosyltransferase group 1 family. Glycosyltransferase 30 subfamily.

It localises to the cell inner membrane. It carries out the reaction lipid IVA (E. coli) + CMP-3-deoxy-beta-D-manno-octulosonate = alpha-Kdo-(2-&gt;6)-lipid IVA (E. coli) + CMP + H(+). The catalysed reaction is alpha-Kdo-(2-&gt;6)-lipid IVA (E. coli) + CMP-3-deoxy-beta-D-manno-octulosonate = alpha-Kdo-(2-&gt;4)-alpha-Kdo-(2-&gt;6)-lipid IVA (E. coli) + CMP + H(+). The enzyme catalyses alpha-Kdo-(2-&gt;4)-alpha-Kdo-(2-&gt;6)-lipid IVA (E. coli) + CMP-3-deoxy-beta-D-manno-octulosonate = alpha-Kdo-(2-&gt;8)-alpha-Kdo-(2-&gt;4)-alpha-Kdo-(2-&gt;6)-lipid IVA (E. coli) + CMP + H(+). It functions in the pathway bacterial outer membrane biogenesis; LPS core biosynthesis. Functionally, involved in lipopolysaccharide (LPS) biosynthesis. Catalyzes the transfer of three 3-deoxy-D-manno-octulosonate (Kdo) residues from CMP-Kdo to lipid IV(A), the tetraacyldisaccharide-1,4'-bisphosphate precursor of lipid A. Thus generates the genus-specific LPS epitope of Chlamydia, composed of the trisaccharide alpha-Kdo-(2-&gt;8)-alpha-Kdo-(2-&gt;4)-alpha-Kdo. The sequence is that of 3-deoxy-D-manno-octulosonic acid transferase (waaA) from Chlamydia trachomatis serovar D (strain ATCC VR-885 / DSM 19411 / UW-3/Cx).